A 108-amino-acid chain; its full sequence is Cytochrome c6 (108 aa).

A signal peptide spans 1–23 (MRLLFAFFIICHIFTNNVQLTFA). Residues cysteine 37, cysteine 40, histidine 41, and methionine 81 each contribute to the heme c site.

The protein belongs to the cytochrome c family. PetJ subfamily. Monomer. Binds 1 heme c group covalently per subunit.

The protein resides in the plastid. The protein localises to the chloroplast thylakoid lumen. Its function is as follows. Functions as an electron carrier between membrane-bound cytochrome b6-f and photosystem I in oxygenic photosynthesis. This Gracilaria tenuistipitata var. liui (Red alga) protein is Cytochrome c6.